The primary structure comprises 546 residues: MCSLGLFPPPPPRGQVTLYEHNNELVTGNSYESPPPDFRGQWINLPVLHLTKDPLKAPGRLDHGTRTAFIHHREQVWKRCINVWHDVGLFGVLNEIANSEEEVFEWVKTACSWALALCGRASSLHGSLFPHLSLRSEDLIAEFAQVTNWSSCCLRVFAWHPHTNKFAVALLDDSIRVYNANSTIVPSLKHRLQRNVAALAWKPLSASVLAVACQSCILIWTLDPTSLSTRPSSGCAQVLSHPGHTPVTSLAWAPNGGWLLSASPVDAVILVWDVSTETCVPLPWFRGGGVTNLLWSPDGSKVLATTPSAVFRVWEAQMWTCEAWPTLSGRCQTGCWSPDGNRLLFTVLGEALIYSLSFPERCGTGKGHVGGAKSATIVADLSETTIQTPDGEERLGGEAHSMVWDPSGERLAVLMKGNPQVQDGNPVILLFRTRNSPVFELLPCGIIQGEPGAQAQLITFHPSFNKGALLSVCWSTGRITHIPLYFVNAQFPRFSPVLGRAQEPPAGGGGSIHEVPLFTETSPTSAPWDPLPGQSSAQPHSPHSHL.

C2 carries the post-translational modification N-acetylcysteine. S33 bears the Phosphoserine mark. WD repeat units follow at residues 149 to 188 (WSSC…VPSL), 191 to 230 (RLQR…LSTR), 243 to 282 (GHTP…CVPL), and 285 to 324 (FRGG…CEAW). Phosphoserine occurs at positions 495, 511, 522, 525, and 541. Positions 500-546 (RAQEPPAGGGGSIHEVPLFTETSPTSAPWDPLPGQSSAQPHSPHSHL) are disordered. The span at 534-546 (QSSAQPHSPHSHL) shows a compositional bias: low complexity. The Microbody targeting signal motif lies at 544 to 546 (SHL).

Interacts with NDC1, the interaction is required for nuclear pore localization. Interacts with the inactive form aurora kinase AURKA. Interacts with PGRMC2. In terms of tissue distribution, widely expressed. Particularly abundant in cerebellum, corpus callosum, adrenal gland, pituitary gland, gastrointestinal structures and fetal lung.

The protein localises to the nucleus. It localises to the nuclear pore complex. Its subcellular location is the cytoplasm. The protein resides in the cytoskeleton. It is found in the spindle pole. The protein localises to the nucleus envelope. In terms of biological role, plays a role in the normal development of the peripheral and central nervous system. Required for the correct localization of aurora kinase AURKA and the microtubule minus end-binding protein NUMA1 as well as a subset of AURKA targets which ensures proper spindle formation and timely chromosome alignment. In Mus musculus (Mouse), this protein is Aladin (Aaas).